Consider the following 611-residue polypeptide: Inhibitor of apoptosis protein (611 aa).

BIR repeat units lie at residues 30 to 97 (ELYR…CSFV), 176 to 242 (EEAR…CPFV), and 262 to 329 (HEAR…CEYL). The Zn(2+) site is built by cysteine 299, cysteine 302, histidine 319, and cysteine 326. One can recognise a CARD domain in the interval 446 to 536 (VASDDLSLIR…VLYKDLFVEK (91 aa)). The segment at 564–599 (CKVCMDKEVSIVFIPCGHLVVCKECAPSLRKCPICR) adopts an RING-type zinc-finger fold.

This sequence belongs to the IAP family. As to expression, cells of the T-lymphocyte lineage. Found in both cortical and medullary cells of the thymus. Expressed at relatively high levels also in spleen, bursa, intestine and lung and at very low levels in testis, brain and skeletal muscle.

It is found in the nucleus. It localises to the cytoplasm. Its function is as follows. Apoptotic suppressor. The protein is Inhibitor of apoptosis protein (ITA) of Gallus gallus (Chicken).